A 213-amino-acid polypeptide reads, in one-letter code: NDR1/HIN1-like protein 26 (213 aa).

Topologically, residues 1–27 are cytoplasmic; sequence MSQISITSPKHCAKKGGININNRHKKL. A helical transmembrane segment spans residues 28–48; that stretch reads FFTFSTFFSGLLLIIFLVWLI. Topologically, residues 49–213 are lumenal; that stretch reads LHPERPEFSL…LQGTRCSTTI (165 aa). Asn67, Asn77, and Asn195 each carry an N-linked (GlcNAc...) asparagine glycan.

In terms of tissue distribution, expressed in the vasculature of roots, rosette leaves, stems, cauline leaves and flowers. Specifically expressed in phloem.

It localises to the cell junction. It is found in the plasmodesma. The protein localises to the endoplasmic reticulum membrane. Its function is as follows. Involved in the regulation of sugar, amino acid and some primary metabolite export from companion cells (CCs) to sieve elements (SEs) in phloem. Required for apoplastic phloem sugar loading in source leaves in order to transport it to sink tissues. Required for correct sugar partitioning between source leaves and sink organs. The protein is NDR1/HIN1-like protein 26 of Arabidopsis thaliana (Mouse-ear cress).